The sequence spans 409 residues: MKDLVERFLSYVSIDTQSNPSAPQCPSTEKQFNLANQLVSELNELELSDVSIDENGYVMGRLPSNVDYDVPAIGFIAHMDTAPDASGENVKPQIINNYQGDIITLGTSGEELTPSQFPDLLNLIGHDLITTDGTTLLGADNKAGIAEILTAIAVLKANPEIPHGDICVGFTPDEEIGRGANLFDVKKFNAKWAYTIDGGPVGELEYENFNATSADVICHGVNVHPGTAKGKMVNSMNIAAQFQMMMPADETPEGTEGYEGFYHLKSMNAGVAKTELGYIVRDFSREGMAERKAFMQQKVNELNAKLEKGRVELVLTDSYFNMREMVEPHPHVIELAKEAMTACDIQPDIKPIRGGTDGARLSFMGLPCPNIFTGGYNFHGIHEFITINGMKQAVDVIVKIAELNASNNK.

His-78 serves as a coordination point for Zn(2+). Asp-80 is a catalytic residue. Zn(2+) is bound at residue Asp-140. The Proton acceptor role is filled by Glu-174. Glu-175, Asp-197, and His-379 together coordinate Zn(2+).

It belongs to the peptidase M20B family. Requires Zn(2+) as cofactor.

The protein resides in the cytoplasm. The enzyme catalyses Release of the N-terminal residue from a tripeptide.. In terms of biological role, cleaves the N-terminal amino acid of tripeptides. In Aliivibrio fischeri (strain ATCC 700601 / ES114) (Vibrio fischeri), this protein is Peptidase T.